A 210-amino-acid chain; its full sequence is Probable GTP-binding protein EngB (210 aa).

The EngB-type G domain occupies 30–204 (QGYEVAFAGR…YRVLADWMEL (175 aa)). Residues 38 to 45 (GRSNAGKS), 64 to 68 (GRTQL), 82 to 85 (DLPG), 149 to 152 (TKAD), and 182 to 185 (LFSA) contribute to the GTP site. Residues Ser-45 and Thr-66 each contribute to the Mg(2+) site.

Belongs to the TRAFAC class TrmE-Era-EngA-EngB-Septin-like GTPase superfamily. EngB GTPase family. It depends on Mg(2+) as a cofactor.

Its function is as follows. Necessary for normal cell division and for the maintenance of normal septation. This Pseudomonas putida (strain ATCC 47054 / DSM 6125 / CFBP 8728 / NCIMB 11950 / KT2440) protein is Probable GTP-binding protein EngB.